A 554-amino-acid chain; its full sequence is Malate synthase 2 (554 aa).

The active-site Proton acceptor is Arg-177. Catalysis depends on Asp-457, which acts as the Proton donor. The short motif at 552 to 554 (SKL) is the SKL peroxisome targeting motif element.

The protein belongs to the malate synthase family. Interacts with PEX9.

Its subcellular location is the peroxisome matrix. It carries out the reaction glyoxylate + acetyl-CoA + H2O = (S)-malate + CoA + H(+). In terms of biological role, allantoin metabolism-specific malate synthase involved in the recycling the glyoxylate generated during allantoin degradation by the ureidoglycollate (UG) hydrolase reaction. In Saccharomyces cerevisiae (strain ATCC 204508 / S288c) (Baker's yeast), this protein is Malate synthase 2.